Consider the following 95-residue polypeptide: Protein TusB (95 aa).

The protein belongs to the DsrH/TusB family. As to quaternary structure, heterohexamer, formed by a dimer of trimers. The hexameric TusBCD complex contains 2 copies each of TusB, TusC and TusD. The TusBCD complex interacts with TusE.

It is found in the cytoplasm. Its function is as follows. Part of a sulfur-relay system required for 2-thiolation of 5-methylaminomethyl-2-thiouridine (mnm(5)s(2)U) at tRNA wobble positions. The sequence is that of Protein TusB from Erwinia tasmaniensis (strain DSM 17950 / CFBP 7177 / CIP 109463 / NCPPB 4357 / Et1/99).